A 148-amino-acid chain; its full sequence is Cystatin-D (148 aa).

The first 33 residues, 1 to 33, serve as a signal peptide directing secretion; that stretch reads MASLLSPSMPVLAAVALTLTLAVIPEASTNAEA. The region spanning 36–148 is the Cystatin kininogen-type domain; that stretch reads VVLGGVEPAD…SMTNFNCYNF (113 aa). 2 disulfide bridges follow: Cys-101-Cys-111 and Cys-125-Cys-145.

The protein belongs to the cystatin family. In terms of tissue distribution, in cartilage, expressed mainly in mature chondrocytes including prehypertrophic and hypertrophic cells (at protein level). Expressed exclusively in cartilage.

It is found in the cytoplasm. It localises to the cytosol. In terms of biological role, may play a role in the last steps of the chondrocyte differentiation pathway as an inducer of maturation. Induces chondrocyte calcification during endochondral ossification by playing a role in the transcriptional inhibition of ENPP1, a generator of pyrophosphate which inhibits calcification. Possibly impairs the binding of a transcription factor to the ENPP1 promoter. Unlike other cystatins, does not have thiol protease inhibitor activity. This Mus musculus (Mouse) protein is Cystatin-D.